Here is a 139-residue protein sequence, read N- to C-terminus: Translation initiation factor 5A (139 aa).

Lys-36 bears the Hypusine mark.

Belongs to the eIF-5A family.

It is found in the cytoplasm. In terms of biological role, functions by promoting the formation of the first peptide bond. The protein is Translation initiation factor 5A (eif5a) of Aeropyrum pernix (strain ATCC 700893 / DSM 11879 / JCM 9820 / NBRC 100138 / K1).